A 47-amino-acid polypeptide reads, in one-letter code: Potassium channel toxin TcoKIK (47 aa).

Residues 14–47 (EYACPAIDKFCEDHCAAKKAVGKCDDFKCNCIKL) form the BetaSPN-type CS-alpha/beta domain. 3 cysteine pairs are disulfide-bonded: Cys-17–Cys-37, Cys-24–Cys-42, and Cys-28–Cys-44.

This sequence belongs to the long chain scorpion toxin family. Class 2 subfamily. As to expression, expressed by the venom gland.

The protein localises to the secreted. It localises to the target cell membrane. Functionally, blocks voltage-gated potassium channels. Its application (10 uM) to cells recombinantly expressing channels results in membrane damage and cell lysis. The sequence is that of Potassium channel toxin TcoKIK from Tityus costatus (Brazilian scorpion).